Reading from the N-terminus, the 124-residue chain is Conotoxin Im14.2 (124 aa).

Residues 1-20 (MARFLSILLCFAMATGLAAG) form the signal peptide. Positions 21 to 99 (IRYPDRVLGR…AENPVRDPKK (79 aa)) are excised as a propeptide.

Contain 2 disulfide bonds. Expressed by the venom duct.

The protein localises to the secreted. Probable neurotoxin. In Conus imperialis (Imperial cone), this protein is Conotoxin Im14.2.